A 394-amino-acid polypeptide reads, in one-letter code: Nuclear hormone receptor family member nhr-103 (394 aa).

Positions 8-83 (SGPCEICGQK…VGMDSKKFQT (76 aa)) form a DNA-binding region, nuclear receptor. The segment at 11-31 (CEICGQKTSGRHFGVLSCRSC) adopts an NR C4-type zinc-finger fold. An NR C4-type; degenerate zinc finger spans residues 47 to 66 (QCVKGTCKIFEDGKFNCKQC). One can recognise an NR LBD domain in the interval 126-394 (YLVDMAKNLL…FSHPEMFETT (269 aa)).

The protein belongs to the nuclear hormone receptor family.

It is found in the nucleus. Orphan nuclear receptor. The protein is Nuclear hormone receptor family member nhr-103 (nhr-103) of Caenorhabditis elegans.